The sequence spans 459 residues: NADH oxidase (459 aa).

Asn-10 contributes to the FAD binding site. Residue His-11 is the Proton acceptor of the active site. Residues Ala-12, Asp-34, Gln-35, Cys-44, Val-81, Ala-110, Ser-113, Lys-143, and Tyr-172 each coordinate FAD. The Redox-active role is filled by Cys-44. Cys-44 carries the post-translational modification Cysteine sulfinic acid (-SO2H). NAD(+) is bound by residues Ile-173, Asp-192, Tyr-201, and Gly-256. Asp-294 is an FAD binding site. Ala-310 is a binding site for NAD(+). The FAD site is built by Leu-311, Ala-312, and Ser-313. Gly-341 provides a ligand contact to NAD(+). Phe-439 is a binding site for FAD.

This sequence belongs to the class-III pyridine nucleotide-disulfide oxidoreductase family. FAD serves as cofactor.

It is found in the secreted. It localises to the cell wall. It carries out the reaction 2 NADH + O2 + 2 H(+) = 2 NAD(+) + 2 H2O. Its function is as follows. Catalyzes the four-electron reduction of molecular oxygen to water. Plays a role in redox balance maintenance. May be involved in mediating bacterial adhesion to host cells. May be considered a potential virulence factor. This chain is NADH oxidase, found in Streptococcus pneumoniae (strain ATCC BAA-255 / R6).